Reading from the N-terminus, the 629-residue chain is Ras GTPase-activating protein gap-1 (629 aa).

Positions 183–398 constitute a Ras-GAP domain; that stretch reads DRIRPVLSSL…SVMASFLDNI (216 aa). Residues 411–507 enclose the PH domain; it reads TVFKFGNLQQ…WLNAIERQRN (97 aa).

The protein resides in the cytoplasm. Its function is as follows. GTPase-activating protein, which inhibits the vulval induction by acting as a negative regulator for the member of the Ras family let-60. Probably decreases the signaling activity of Ras by stimulating its intrinsic GTPase activity, thereby lowering the levels of GTP-bound, active Ras. In Caenorhabditis elegans, this protein is Ras GTPase-activating protein gap-1 (gap-1).